A 418-amino-acid polypeptide reads, in one-letter code: Putative ion-transport protein YfeO (418 aa).

The next 10 membrane-spanning stretches (helical) occupy residues 15-37, 57-79, 99-118, 149-171, 186-208, 221-243, 258-280, 301-323, 343-363, and 376-398; these read PAVA…ASVL, LWII…FSQG, ALPR…VSLG, ILAS…LIFS, LFAP…HPHF, TDIL…AVWC, VLVL…PVSL, YFLL…FRGG, VPAV…VLVV, and VVVP…WLLL.

Belongs to the chloride channel (TC 2.A.49) family.

It localises to the cell membrane. The sequence is that of Putative ion-transport protein YfeO (yfeO) from Shigella flexneri.